The chain runs to 375 residues: Queuine tRNA-ribosyltransferase (375 aa).

Asp-90 (proton acceptor) is an active-site residue. Substrate contacts are provided by residues 90-94, Asp-144, Gln-190, and Gly-217; that span reads DSGGF. Positions 248–254 are RNA binding; that stretch reads GIGTPHY. The active-site Nucleophile is the Asp-267. The segment at 272–276 is RNA binding; important for wobble base 34 recognition; the sequence is TRIAR. Cys-305, Cys-307, Cys-310, and His-336 together coordinate Zn(2+).

The protein belongs to the queuine tRNA-ribosyltransferase family. As to quaternary structure, homodimer. Within each dimer, one monomer is responsible for RNA recognition and catalysis, while the other monomer binds to the replacement base PreQ1. Zn(2+) is required as a cofactor.

It carries out the reaction 7-aminomethyl-7-carbaguanine + guanosine(34) in tRNA = 7-aminomethyl-7-carbaguanosine(34) in tRNA + guanine. Its pathway is tRNA modification; tRNA-queuosine biosynthesis. In terms of biological role, catalyzes the base-exchange of a guanine (G) residue with the queuine precursor 7-aminomethyl-7-deazaguanine (PreQ1) at position 34 (anticodon wobble position) in tRNAs with GU(N) anticodons (tRNA-Asp, -Asn, -His and -Tyr). Catalysis occurs through a double-displacement mechanism. The nucleophile active site attacks the C1' of nucleotide 34 to detach the guanine base from the RNA, forming a covalent enzyme-RNA intermediate. The proton acceptor active site deprotonates the incoming PreQ1, allowing a nucleophilic attack on the C1' of the ribose to form the product. After dissociation, two additional enzymatic reactions on the tRNA convert PreQ1 to queuine (Q), resulting in the hypermodified nucleoside queuosine (7-(((4,5-cis-dihydroxy-2-cyclopenten-1-yl)amino)methyl)-7-deazaguanosine). This is Queuine tRNA-ribosyltransferase from Borrelia recurrentis (strain A1).